A 2473-amino-acid polypeptide reads, in one-letter code: Reducing polyketide synthase grgA (2473 aa).

In terms of domain architecture, Ketosynthase family 3 (KS3) spans arginine 15 to serine 446. Catalysis depends on for beta-ketoacyl synthase activity residues cysteine 188, histidine 327, and histidine 366. The region spanning isoleucine 559–alanine 882 is the Malonyl-CoA:ACP transacylase (MAT) domain. Positions histidine 956–proline 1099 are N-terminal hotdog fold. The segment at histidine 956 to arginine 1260 is dehydratase (DH) domain. One can recognise a PKS/mFAS DH domain in the interval histidine 956–proline 1262. The active-site Proton acceptor; for dehydratase activity is histidine 990. The C-terminal hotdog fold stretch occupies residues methionine 1114–proline 1262. Aspartate 1172 acts as the Proton donor; for dehydratase activity in catalysis. The interval threonine 1300–glutamine 1606 is methyltransfrase (MT) domain. The Ketoreductase (KR) domain maps to threonine 2108–leucine 2281. A Carrier domain is found at alanine 2388 to serine 2473. Serine 2426 carries the O-(pantetheine 4'-phosphoryl)serine modification.

Pantetheine 4'-phosphate is required as a cofactor.

It participates in secondary metabolite biosynthesis. Reducing polyketide synthase; part of the gene cluster that mediates the biosynthesis of gregatin A, a fungal polyketide featuring an alkylated furanone core. The PKS grgA synthesizes C11 and C4 polyketide chains in the presence and absence of the trans-enoyl reductase grgB, respectively. The polyketide transferase grgF is then responsible for the fusion of the two carbon chains to produce the furanone skeleton of gregatin A. Next, the cytochrome P450 monooxygenase grgG accepts performs the oxidative cyclization to furnish the gregatin scaffold and leads to the formation of desmethylgregatin A. Finally, the O-methyltransferase grgD methylates the carboxyl group of desmethylgregatin A to provide gregatin A. In Penicillium sp, this protein is Reducing polyketide synthase grgA.